The primary structure comprises 76 residues: UPF0235 protein MRA_1997 (76 aa).

Belongs to the UPF0235 family.

The polypeptide is UPF0235 protein MRA_1997 (Mycobacterium tuberculosis (strain ATCC 25177 / H37Ra)).